A 127-amino-acid chain; its full sequence is Ribonuclease P protein component (127 aa).

This sequence belongs to the RnpA family. In terms of assembly, consists of a catalytic RNA component (M1 or rnpB) and a protein subunit.

The catalysed reaction is Endonucleolytic cleavage of RNA, removing 5'-extranucleotides from tRNA precursor.. In terms of biological role, RNaseP catalyzes the removal of the 5'-leader sequence from pre-tRNA to produce the mature 5'-terminus. It can also cleave other RNA substrates such as 4.5S RNA. The protein component plays an auxiliary but essential role in vivo by binding to the 5'-leader sequence and broadening the substrate specificity of the ribozyme. The chain is Ribonuclease P protein component from Agrobacterium fabrum (strain C58 / ATCC 33970) (Agrobacterium tumefaciens (strain C58)).